We begin with the raw amino-acid sequence, 522 residues long: Glutamate--cysteine ligase (522 aa).

This sequence belongs to the glutamate--cysteine ligase type 1 family. Type 1 subfamily.

The catalysed reaction is L-cysteine + L-glutamate + ATP = gamma-L-glutamyl-L-cysteine + ADP + phosphate + H(+). Its pathway is sulfur metabolism; glutathione biosynthesis; glutathione from L-cysteine and L-glutamate: step 1/2. This is Glutamate--cysteine ligase from Vibrio campbellii (strain ATCC BAA-1116).